Consider the following 525-residue polypeptide: Phospho-2-dehydro-3-deoxyheptonate aldolase 1, chloroplastic (525 aa).

The span at M1–S13 shows a compositional bias: polar residues. A disordered region spans residues M1–A35. The transit peptide at M1–A52 directs the protein to the chloroplast.

Belongs to the class-II DAHP synthase family.

The protein resides in the plastid. It localises to the chloroplast. The catalysed reaction is D-erythrose 4-phosphate + phosphoenolpyruvate + H2O = 7-phospho-2-dehydro-3-deoxy-D-arabino-heptonate + phosphate. Its pathway is metabolic intermediate biosynthesis; chorismate biosynthesis; chorismate from D-erythrose 4-phosphate and phosphoenolpyruvate: step 1/7. This is Phospho-2-dehydro-3-deoxyheptonate aldolase 1, chloroplastic (DHS1) from Arabidopsis thaliana (Mouse-ear cress).